The primary structure comprises 215 residues: UPF0502 protein YceH (215 aa).

K80 carries the N6-acetyllysine modification.

The protein belongs to the UPF0502 family.

This Shigella flexneri serotype 5b (strain 8401) protein is UPF0502 protein YceH.